Here is a 1436-residue protein sequence, read N- to C-terminus: Probable deoxyribonuclease RhsB (1436 aa).

A disordered region spans residues 16 to 42 (HAGNRPNPPADRPQPCQGKPPTSPGKT). 2 helical membrane-spanning segments follow: residues 48 to 68 (FLGALAGAVAGALVAAAVAAA) and 70 to 90 (VFLVGVTGGLAVAAVGALAVF). YD repeat units follow at residues 486–521 (YNTAHRLTRWHDNDQTWARYEYDAQGRCVYTTCADG), 569–605 (YDEVGNLLREISPAGRVVEFTYLDDTGRVSTFTDGSG), 612–647 (YDDAQRLCGVTDPLGREWGWVYDAEGNPERLTGPDA), 766–799 (DLLTARTDAEGRTWRYEYDRESQQLIAVTAPDGS), and 847–879 (YDARGLLLRETAPDDTLHYRYDAAGRLTEVSSA).

Belongs to the RHS/WapA nuclease family.

It localises to the membrane. Toxic component of a toxin-immunity protein module, which functions as a cellular contact-dependent growth inhibition (CDI) system. This protein may be a nuclease that is specifically inhibited by its cognate immunity protein RhsBI. Upon expression of the C-terminus (residues 1284-1436) in E.coli growth is inhibited, cells elongate, nucleoids condense and plasmid DNA is degraded; these effects are blocked specifically by cognate immunity protein RshIB. Cell contact is necessary for growth inhibition. This is Probable deoxyribonuclease RhsB (rhsB) from Dickeya dadantii (strain 3937) (Erwinia chrysanthemi (strain 3937)).